The following is a 347-amino-acid chain: MERTIKGVCDGENGEGVRNCHCVVALSGGADSTALLLILHYLRQRLGLSLSALHVDHGLRPESAAEARAAVTFCHALGIPLAVHTLTVDELAAVWRVGTEEAGRKARYDLLAAALPSPAADWICTGHHLGDLAEDVLMRLVRGCGWPALGGMRLCDPARRILRPLLLTEKDRLEAFLATLGVSWTEDPSNASDTYLRNRMRHGVIPLLTAENPGFLDQVRDLWQLAHIDADFWETRTAATLSAAPASPSHVEGEASAPHDAAHGAESIRLPKTTLTGLHQAERLRLFKEVLRRMGEGQARAETLLALDAAWVAGRGGTRFMFAGCKTATVRRGDIIFSGGPPAEDTP.

Residue 27 to 32 (SGGADS) participates in ATP binding. A disordered region spans residues 243-263 (AAPASPSHVEGEASAPHDAAH).

This sequence belongs to the tRNA(Ile)-lysidine synthase family.

Its subcellular location is the cytoplasm. It catalyses the reaction cytidine(34) in tRNA(Ile2) + L-lysine + ATP = lysidine(34) in tRNA(Ile2) + AMP + diphosphate + H(+). Functionally, ligates lysine onto the cytidine present at position 34 of the AUA codon-specific tRNA(Ile) that contains the anticodon CAU, in an ATP-dependent manner. Cytidine is converted to lysidine, thus changing the amino acid specificity of the tRNA from methionine to isoleucine. The sequence is that of tRNA(Ile)-lysidine synthase from Nitratidesulfovibrio vulgaris (strain ATCC 29579 / DSM 644 / CCUG 34227 / NCIMB 8303 / VKM B-1760 / Hildenborough) (Desulfovibrio vulgaris).